We begin with the raw amino-acid sequence, 880 residues long: Alanine--tRNA ligase (880 aa).

Zn(2+) contacts are provided by His567, His571, Cys669, and His673.

This sequence belongs to the class-II aminoacyl-tRNA synthetase family. Zn(2+) serves as cofactor.

Its subcellular location is the cytoplasm. It carries out the reaction tRNA(Ala) + L-alanine + ATP = L-alanyl-tRNA(Ala) + AMP + diphosphate. Its function is as follows. Catalyzes the attachment of alanine to tRNA(Ala) in a two-step reaction: alanine is first activated by ATP to form Ala-AMP and then transferred to the acceptor end of tRNA(Ala). Also edits incorrectly charged Ser-tRNA(Ala) and Gly-tRNA(Ala) via its editing domain. The protein is Alanine--tRNA ligase of Syntrophomonas wolfei subsp. wolfei (strain DSM 2245B / Goettingen).